A 473-amino-acid polypeptide reads, in one-letter code: Trigger factor (473 aa).

One can recognise a PPIase FKBP-type domain in the interval G171–A256. The segment at K439–D473 is disordered. Residues P456–D473 are compositionally biased toward basic and acidic residues.

It belongs to the FKBP-type PPIase family. Tig subfamily.

It is found in the cytoplasm. It carries out the reaction [protein]-peptidylproline (omega=180) = [protein]-peptidylproline (omega=0). Functionally, involved in protein export. Acts as a chaperone by maintaining the newly synthesized protein in an open conformation. Functions as a peptidyl-prolyl cis-trans isomerase. This Methylobacterium radiotolerans (strain ATCC 27329 / DSM 1819 / JCM 2831 / NBRC 15690 / NCIMB 10815 / 0-1) protein is Trigger factor.